Reading from the N-terminus, the 189-residue chain is Interferon alpha-C (189 aa).

A signal peptide spans 1–23 (MAPAWSFRLALLLLSCNAICSLG). 2 cysteine pairs are disulfide-bonded: cysteine 24–cysteine 122 and cysteine 52–cysteine 162.

This sequence belongs to the alpha/beta interferon family.

It localises to the secreted. Functionally, produced by macrophages, IFN-alpha have antiviral activities. Interferon stimulates the production of two enzymes: a protein kinase and an oligoadenylate synthetase. This chain is Interferon alpha-C (IFNAC), found in Bos taurus (Bovine).